Consider the following 348-residue polypeptide: Peptide-N(4)-(N-acetyl-beta-glucosaminyl)asparagine amidase (348 aa).

The Zn(2+) site is built by Cys116, Cys119, Cys151, and Cys154. Cys177 serves as the catalytic Nucleophile. Residues His204 and Asp221 contribute to the active site. Glu224 serves as a coordination point for substrate. Positions 311 to 348 are disordered; it reads PSATPTKEMQKLKISKTGNKGRISGSAEWKESRGENGK. Residues 338 to 348 show a composition bias toward basic and acidic residues; sequence EWKESRGENGK.

Belongs to the transglutaminase-like superfamily. PNGase family. It depends on Zn(2+) as a cofactor.

It is found in the cytoplasm. The enzyme catalyses Hydrolysis of an N(4)-(acetyl-beta-D-glucosaminyl)asparagine residue in which the glucosamine residue may be further glycosylated, to yield a (substituted) N-acetyl-beta-D-glucosaminylamine and a peptide containing an aspartate residue.. In terms of biological role, specifically deglycosylates the denatured form of N-linked glycoproteins in the cytoplasm and assists their proteasome-mediated degradation. Cleaves the beta-aspartyl-glucosamine (GlcNAc) of the glycan and the amide side chain of Asn, converting Asn to Asp. Prefers proteins containing high-mannose over those bearing complex type oligosaccharides. Can recognize misfolded proteins in the endoplasmic reticulum that are exported to the cytosol to be destroyed and deglycosylate them, while it has no activity toward native proteins. Deglycosylation is a prerequisite for subsequent proteasome-mediated degradation of some, but not all, misfolded glycoproteins. This is Peptide-N(4)-(N-acetyl-beta-glucosaminyl)asparagine amidase (PNG1) from Candida glabrata (strain ATCC 2001 / BCRC 20586 / JCM 3761 / NBRC 0622 / NRRL Y-65 / CBS 138) (Yeast).